The primary structure comprises 488 residues: BRAP2 RING ZnF UBP domain-containing protein 1 (488 aa).

The segment at 174–214 adopts an RING-type; degenerate zinc-finger fold; it reads CPICLERLDPDTSGIVSTLCDHSFQCSCTSKWTYLSCQVCR. The UBP-type; degenerate zinc finger occupies 208–301; that stretch reads LSCQVCRLCQ…GKSVEMSTSC (94 aa). Zn(2+)-binding residues include cysteine 225, cysteine 228, cysteine 237, cysteine 240, cysteine 245, histidine 252, histidine 256, and histidine 262. Residues 370–418 adopt a coiled-coil conformation; sequence EQIVVNTMQELQNKIEKCEEEKSGITEVNTKLIKEQDTWRKKAKEIEER. The segment at 453–488 is disordered; it reads MSSDTDGIREGTVLPVPISPEPVSSVRRQKKSNRRK. Low complexity predominate over residues 465–478; that stretch reads VLPVPISPEPVSSV. Over residues 479–488 the composition is skewed to basic residues; that stretch reads RRQKKSNRRK.

In terms of assembly, component of the heteromeric E3 ligase complex made of BRIZ1 and BRIZ2. Forms heterooligomers with BRIZ2 via coiled-coil domains.

It catalyses the reaction S-ubiquitinyl-[E2 ubiquitin-conjugating enzyme]-L-cysteine + [acceptor protein]-L-lysine = [E2 ubiquitin-conjugating enzyme]-L-cysteine + N(6)-ubiquitinyl-[acceptor protein]-L-lysine.. Its pathway is protein modification; protein ubiquitination. In terms of biological role, RING-type ubiquitin E3 ligase required for seed germination and post-germination growth. The polypeptide is BRAP2 RING ZnF UBP domain-containing protein 1 (Arabidopsis thaliana (Mouse-ear cress)).